A 688-amino-acid polypeptide reads, in one-letter code: Soluble guanylate cyclase gcy-35 (688 aa).

Histidine 105 serves as a coordination point for heme. Positions 358–401 (LNQSRMSQVELNRTLEETTKKLKKMAQELEIEKQKTDELLCELM) form a coiled coil. Residues 424–552 (TLLFTDIVTF…DTVNVANKME (129 aa)) form the Guanylate cyclase domain. Mg(2+)-binding residues include aspartate 429 and aspartate 473. The tract at residues 644–688 (VENGNSAQNNHNNNNNTHHSGRKLMNGSSVDPGSHHIRSPTCTIS) is disordered. Low complexity predominate over residues 646–659 (NGNSAQNNHNNNNN).

This sequence belongs to the adenylyl cyclase class-4/guanylyl cyclase family. As to quaternary structure, heterodimer; heterodimerizes with gcy-36, and possibly with other soluble guanylate cyclases. It depends on heme as a cofactor. Expressed in URX, AQR and PQR neurons. Also expressed in ALN, SDQ and BDU neurons, and variably in AVM, PLM and PLN neurons, pharyngeal and body wall muscles, and the excretory cell.

It localises to the cytoplasm. It is found in the cell projection. The protein resides in the dendrite. It carries out the reaction GTP = 3',5'-cyclic GMP + diphosphate. With respect to regulation, regulated by molecular oxygen, which binds to the heme binding site. Probably not activated by nitric oxide (NO). In terms of biological role, plays a central role in social feeding behavior and oxygen sensation by synthesizing 3',5'-cyclic guanosine monophosphate (cGMP) from GTP. Oxygen, which binds to its heme-binding sites, probably regulates social behavior by modulating its activity. cGMP is a common second messenger in sensory transduction and is implicated in oxygen sensation. Indeed, C.elegans exhibits a strong behavioral preference for 5-12% oxygen, avoiding higher and lower oxygen levels; a higher level of oxygen inducing a naturally polymorphic social feeding behavior. Involved in avoidance of hyperoxia and for oxygen-induced aggregation and bordering, probably by mediating oxygen-sensing in URX, AQR and PQR sensory neurons. This Caenorhabditis elegans protein is Soluble guanylate cyclase gcy-35 (gcy-35).